The primary structure comprises 915 residues: Nitrate reductase [NADH] (915 aa).

Residues 1–102 (MAASVEPRQP…PRDEGTADAW (102 aa)) are disordered. Residues 16–26 (APATAPTARAP) are compositionally biased toward low complexity. The segment covering 57–71 (AEEEEDDDDEDDEGH) has biased composition (acidic residues). A compositionally biased stretch (basic and acidic residues) spans 88-97 (PSTRDPRDEG). Cysteine 189 is a Mo-molybdopterin binding site. One can recognise a Cytochrome b5 heme-binding domain in the interval 538 to 613 (DKQFTMSEVR…LDTYRIGELI (76 aa)). Heme contacts are provided by histidine 573 and histidine 596. Residues 654 to 767 (REKVPCRLVD…KGPLGHVEYT (114 aa)) enclose the FAD-binding FR-type domain. Residues 706 to 709 (RAYT), 723 to 727 (LVKVY), phenylalanine 728, phenylalanine 735, 740 to 742 (LMT), serine 791, and threonine 794 each bind FAD.

The protein belongs to the nitrate reductase family. Homodimer. The cofactor is FAD. Heme serves as cofactor. It depends on Mo-molybdopterin as a cofactor.

The catalysed reaction is nitrite + NAD(+) + H2O = nitrate + NADH + H(+). In terms of biological role, nitrate reductase is a key enzyme involved in the first step of nitrate assimilation in plants, fungi and bacteria. This Hordeum vulgare (Barley) protein is Nitrate reductase [NADH].